The chain runs to 349 residues: Heme A synthase (349 aa).

The next 5 helical transmembrane spans lie at 15 to 35 (AVQV…VVGG), 101 to 121 (LLGR…ALTG), 132 to 152 (FGLF…VASG), 162 to 182 (YRLA…VAVA), and 203 to 223 (VLVG…GLDA). His265 is a heme binding site. Helical transmembrane passes span 268–288 (IAYL…RLGG), 296–316 (LVFA…VHMV), and 317–337 (PLDL…AAMI). His324 is a binding site for heme.

Belongs to the COX15/CtaA family. Type 2 subfamily. In terms of assembly, interacts with CtaB. Requires heme b as cofactor.

The protein localises to the cell membrane. The catalysed reaction is Fe(II)-heme o + 2 A + H2O = Fe(II)-heme a + 2 AH2. It participates in porphyrin-containing compound metabolism; heme A biosynthesis; heme A from heme O: step 1/1. In terms of biological role, catalyzes the conversion of heme O to heme A by two successive hydroxylations of the methyl group at C8. The first hydroxylation forms heme I, the second hydroxylation results in an unstable dihydroxymethyl group, which spontaneously dehydrates, resulting in the formyl group of heme A. This is Heme A synthase from Azorhizobium caulinodans (strain ATCC 43989 / DSM 5975 / JCM 20966 / LMG 6465 / NBRC 14845 / NCIMB 13405 / ORS 571).